The primary structure comprises 256 residues: L-erythrulose-1-phosphate isomerase (256 aa).

H96 functions as the Electrophile in the catalytic mechanism. Residue E169 is the Proton acceptor of the active site. Positions 175 and 212 each coordinate substrate.

Belongs to the triosephosphate isomerase family. Homodimer.

Its subcellular location is the cytoplasm. The catalysed reaction is L-erythrulose 1-phosphate = D-erythrulose 4-phosphate. It participates in carbohydrate metabolism; erythritol degradation. In terms of biological role, catalyzes the isomerization of D-erythrulose-4P to L-erythrulose-1P. This chain is L-erythrulose-1-phosphate isomerase, found in Brucella melitensis biotype 1 (strain ATCC 23456 / CCUG 17765 / NCTC 10094 / 16M).